The primary structure comprises 546 residues: Immunoglobulin-like domain-containing receptor 1 (546 aa).

Residues 1 to 23 (MAWPKLPAPWLLLCTWLPAGCLS) form the signal peptide. One can recognise an Ig-like V-type domain in the interval 24–162 (LLVTVQHTER…TSGDPDKEVK (139 aa)). Residues 24–167 (LLVTVQHTER…DKEVKLIVLH (144 aa)) lie on the Extracellular side of the membrane. Cysteines 45 and 145 form a disulfide. Residues 168-188 (WLTVIFIILGALLLLLLIGVC) form a helical membrane-spanning segment. Residues 189–546 (WCQCCPQYCC…SSHSGRSVVI (358 aa)) are Cytoplasmic-facing. Positions 399 to 546 (WSGRHRSSRL…SSHSGRSVVI (148 aa)) are disordered. Residues 442–457 (RCQERPRRPSPRESTQ) show a composition bias toward basic and acidic residues. Positions 458–467 (RHGRRRRHRS) are enriched in basic residues. A phosphoserine mark is found at S499 and S501. A compositionally biased stretch (basic and acidic residues) spans 527–539 (GSVERRSEKDSSH).

Belongs to the immunoglobulin superfamily. LISCH7 family. Homooligomer. Interacts with MARVELD2 and OCLN; the interaction is required to recruit MARVELD2 to tricellular contacts. Interacts (via C-terminus) with TRA2A, TRA2B and SRSF1. Interacts with PLSCR1. Mainly expressed in prostate and to a lower extent in testis, pancreas, kidney, heart and liver.

The protein localises to the cell membrane. It localises to the cell junction. Its subcellular location is the tight junction. The protein resides in the cytoplasm. It is found in the cytosol. Functionally, maintains epithelial barrier function by recruiting MARVELD2/tricellulin to tricellular tight junctions (tTJs). Crucial for normal hearing by maintaining the structural and functional integrity of tTJs, which are critical for the survival of auditory neurosensory HCs. Mediates fatty acids and lipoproteins-stimulated CCK/cholecystokinin secretion in the small intestine. In the inner ear, may regulate alternative pre-mRNA splicing via binding to TRA2A, TRA2B and SRSF1. Its function is as follows. (Microbial infection) Promotes influenza virus infection by inhibiting viral nucleoprotein NP binding to PLSCR1 and thereby PLSCR1-mediated antiviral activity. This Homo sapiens (Human) protein is Immunoglobulin-like domain-containing receptor 1.